The following is a 150-amino-acid chain: Cyclin-dependent kinases regulatory subunit (150 aa).

Positions 115-137 are enriched in low complexity; sequence AAAQQQQQQQQQQQQQQQQHQTQ. The interval 115-150 is disordered; it reads AAAQQQQQQQQQQQQQQQQHQTQSISNDMQVPPQIS.

This sequence belongs to the CKS family. In terms of assembly, forms a stable but non-covalent complex with the CDC28 protein and with a cyclin.

Its function is as follows. Binds to the catalytic subunit of the cyclin dependent kinase (CDC28) and is essential for its biological function. The sequence is that of Cyclin-dependent kinases regulatory subunit from Saccharomyces cerevisiae (strain ATCC 204508 / S288c) (Baker's yeast).